A 350-amino-acid polypeptide reads, in one-letter code: Ketol-acid reductoisomerase (NADP(+)) (350 aa).

The 184-residue stretch at 4-187 folds into the KARI N-terminal Rossmann domain; it reads VSITTDYSRM…GGARANIIKT (184 aa). NADP(+)-binding positions include 30–33, Arg-53, Thr-58, and 88–91; these read YGSQ and DMVQ. His-113 is an active-site residue. Position 139 (Gly-139) interacts with NADP(+). The 146-residue stretch at 188–333 folds into the KARI C-terminal knotted domain; the sequence is TFKEETETDL…KQLRAKMVWL (146 aa). Positions 196, 200, 232, and 236 each coordinate Mg(2+). Residue Ser-257 participates in substrate binding.

It belongs to the ketol-acid reductoisomerase family. It depends on Mg(2+) as a cofactor.

The catalysed reaction is (2R)-2,3-dihydroxy-3-methylbutanoate + NADP(+) = (2S)-2-acetolactate + NADPH + H(+). It carries out the reaction (2R,3R)-2,3-dihydroxy-3-methylpentanoate + NADP(+) = (S)-2-ethyl-2-hydroxy-3-oxobutanoate + NADPH + H(+). It participates in amino-acid biosynthesis; L-isoleucine biosynthesis; L-isoleucine from 2-oxobutanoate: step 2/4. It functions in the pathway amino-acid biosynthesis; L-valine biosynthesis; L-valine from pyruvate: step 2/4. Its function is as follows. Involved in the biosynthesis of branched-chain amino acids (BCAA). Catalyzes an alkyl-migration followed by a ketol-acid reduction of (S)-2-acetolactate (S2AL) to yield (R)-2,3-dihydroxy-isovalerate. In the isomerase reaction, S2AL is rearranged via a Mg-dependent methyl migration to produce 3-hydroxy-3-methyl-2-ketobutyrate (HMKB). In the reductase reaction, this 2-ketoacid undergoes a metal-dependent reduction by NADPH to yield (R)-2,3-dihydroxy-isovalerate. This chain is Ketol-acid reductoisomerase (NADP(+)), found in Xylella fastidiosa (strain Temecula1 / ATCC 700964).